We begin with the raw amino-acid sequence, 205 residues long: Ribonuclease HII (205 aa).

Residues 22 to 205 form the RNase H type-2 domain; that stretch reads RFICGVDEAG…RKSFLKNILR (184 aa). A divalent metal cation contacts are provided by aspartate 28, glutamate 29, and aspartate 120.

This sequence belongs to the RNase HII family. The cofactor is Mn(2+). It depends on Mg(2+) as a cofactor.

The protein resides in the cytoplasm. It carries out the reaction Endonucleolytic cleavage to 5'-phosphomonoester.. Endonuclease that specifically degrades the RNA of RNA-DNA hybrids. The polypeptide is Ribonuclease HII (Caldicellulosiruptor saccharolyticus (strain ATCC 43494 / DSM 8903 / Tp8T 6331)).